Consider the following 132-residue polypeptide: Ribosome-binding factor A (132 aa).

This sequence belongs to the RbfA family. Monomer. Binds 30S ribosomal subunits, but not 50S ribosomal subunits or 70S ribosomes.

Its subcellular location is the cytoplasm. In terms of biological role, one of several proteins that assist in the late maturation steps of the functional core of the 30S ribosomal subunit. Associates with free 30S ribosomal subunits (but not with 30S subunits that are part of 70S ribosomes or polysomes). Required for efficient processing of 16S rRNA. May interact with the 5'-terminal helix region of 16S rRNA. The chain is Ribosome-binding factor A from Pseudomonas putida (strain W619).